The sequence spans 352 residues: Peptide chain release factor 1 (352 aa).

N5-methylglutamine is present on Q233. The tract at residues 288–309 (NAKDRKEQVGSGDRSERIRTYN) is disordered. Residues 289 to 306 (AKDRKEQVGSGDRSERIR) are compositionally biased toward basic and acidic residues.

It belongs to the prokaryotic/mitochondrial release factor family. Methylated by PrmC. Methylation increases the termination efficiency of RF1.

It localises to the cytoplasm. In terms of biological role, peptide chain release factor 1 directs the termination of translation in response to the peptide chain termination codons UAG and UAA. This is Peptide chain release factor 1 from Helicobacter pylori (strain G27).